Here is a 221-residue protein sequence, read N- to C-terminus: MSRRGDWVYENNGGTCVAIAGADYCVVAADTRLSVGYNILTRDHSKICELADKCALASSGFQGDIKALHKNLAARELLYQHQHNKRMSCPAMAQLLSNTLYYKRFFPYYAFNVLGGLDSEGKGCVFTYDAVGSYERTGYSAQGTGSALIMPVLDNQLKSPSPLLLPARDAVTPLSETEAVDLVKDVFASATERDIYTGDKLEIVVINKAGTKREYIDLRKD.

Belongs to the peptidase T1B family. As to quaternary structure, the 26S proteasome consists of a 20S proteasome core and two 19S regulatory subunits. The 20S proteasome core is composed of 28 subunits that are arranged in four stacked rings, resulting in a barrel-shaped structure. The two end rings are each formed by seven alpha subunits, and the two central rings are each formed by seven beta subunits. The catalytic chamber with the active sites is on the inside of the barrel.

It localises to the cytoplasm. The protein localises to the nucleus. Its function is as follows. Non-catalytic component of the proteasome, a multicatalytic proteinase complex which is characterized by its ability to cleave peptides with Arg, Phe, Tyr, Leu, and Glu adjacent to the leaving group at neutral or slightly basic pH. The proteasome has an ATP-dependent proteolytic activity. The polypeptide is Proteasome subunit beta type-1 (PBF1) (Oryza sativa subsp. japonica (Rice)).